The following is a 167-amino-acid chain: Photosystem I assembly protein Ycf3 (167 aa).

3 TPR repeats span residues 35–68 (AFSY…ETDA), 72–105 (SYIL…NPSL), and 120–153 (GEQA…APTN).

It belongs to the Ycf3 family.

It is found in the plastid. Its subcellular location is the chloroplast thylakoid membrane. Functionally, essential for the assembly of the photosystem I (PSI) complex. May act as a chaperone-like factor to guide the assembly of the PSI subunits. This chain is Photosystem I assembly protein Ycf3, found in Chlorella vulgaris (Green alga).